We begin with the raw amino-acid sequence, 151 residues long: Troponin C, isoallergen Bla g 6.0101 (151 aa).

EF-hand domains follow at residues 7-42 (EQIQ…LGHR), 43-78 (LDDD…FLVE), 83-118 (AMQQ…LDDK), and 119-151 (ITAE…MTGE). Residues aspartate 56, aspartate 58, serine 60, glutamate 62, and glutamate 67 each contribute to the Ca(2+) site. The Ca(2+) site is built by aspartate 132, aspartate 134, serine 136, threonine 138, and glutamate 143.

It belongs to the troponin C family.

In terms of biological role, troponin is the central regulatory protein of striated muscle contraction. It consists of three components: Troponin-I (Tn-I) which is the inhibitor of actomyosin ATPase, Troponin-T (Tn-T) which contains the binding site for tropomyosin and Troponin-C (Tn-C). The binding of calcium to Tn-C abolishes the inhibitory action of Tn on actin filaments. The chain is Troponin C, isoallergen Bla g 6.0101 from Blattella germanica (German cockroach).